The sequence spans 92 residues: UPF0250 protein XOO3732 (92 aa).

The protein belongs to the UPF0250 family.

The sequence is that of UPF0250 protein XOO3732 from Xanthomonas oryzae pv. oryzae (strain MAFF 311018).